Here is a 585-residue protein sequence, read N- to C-terminus: Formate--tetrahydrofolate ligase (585 aa).

65-72 (TPHGEGKT) contacts ATP.

It belongs to the formate--tetrahydrofolate ligase family.

It catalyses the reaction (6S)-5,6,7,8-tetrahydrofolate + formate + ATP = (6R)-10-formyltetrahydrofolate + ADP + phosphate. It functions in the pathway one-carbon metabolism; tetrahydrofolate interconversion. In Shewanella baltica (strain OS195), this protein is Formate--tetrahydrofolate ligase.